We begin with the raw amino-acid sequence, 145 residues long: 3-hydroxyacyl-[acyl-carrier-protein] dehydratase FabZ (145 aa).

The active site involves H48.

Belongs to the thioester dehydratase family. FabZ subfamily.

Its subcellular location is the cytoplasm. It carries out the reaction a (3R)-hydroxyacyl-[ACP] = a (2E)-enoyl-[ACP] + H2O. Functionally, involved in unsaturated fatty acids biosynthesis. Catalyzes the dehydration of short chain beta-hydroxyacyl-ACPs and long chain saturated and unsaturated beta-hydroxyacyl-ACPs. In Marinomonas sp. (strain MWYL1), this protein is 3-hydroxyacyl-[acyl-carrier-protein] dehydratase FabZ.